We begin with the raw amino-acid sequence, 426 residues long: Elongation factor 1-alpha (426 aa).

The region spanning 5–221 is the tr-type G domain; it reads KPHMNLAVIG…DTFKEPDKPT (217 aa). The tract at residues 14–21 is G1; it reads GHIDHGKS. Position 14–21 (14–21) interacts with GTP; the sequence is GHIDHGKS. Residue serine 21 participates in Mg(2+) binding. The G2 stretch occupies residues 70 to 74; the sequence is GITID. Residues 91–94 form a G3 region; it reads DCPG. Residues 91-95 and 146-149 contribute to the GTP site; these read DCPGH and NKMD. A G4 region spans residues 146–149; it reads NKMD. The tract at residues 185–187 is G5; that stretch reads SSF.

The protein belongs to the TRAFAC class translation factor GTPase superfamily. Classic translation factor GTPase family. EF-Tu/EF-1A subfamily.

It is found in the cytoplasm. It carries out the reaction GTP + H2O = GDP + phosphate + H(+). Its function is as follows. GTP hydrolase that promotes the GTP-dependent binding of aminoacyl-tRNA to the A-site of ribosomes during protein biosynthesis. The sequence is that of Elongation factor 1-alpha from Methanosphaerula palustris (strain ATCC BAA-1556 / DSM 19958 / E1-9c).